A 385-amino-acid chain; its full sequence is 3-hydroxyisobutyryl-CoA hydrolase, mitochondrial (385 aa).

Positions 120, 145, 168, and 176 each coordinate substrate.

The protein belongs to the enoyl-CoA hydratase/isomerase family.

The protein localises to the mitochondrion. It carries out the reaction 3-hydroxy-2-methylpropanoyl-CoA + H2O = 3-hydroxy-2-methylpropanoate + CoA + H(+). It participates in amino-acid degradation; L-valine degradation. Its function is as follows. Hydrolyzes 3-hydroxyisobutyryl-CoA (HIBYL-CoA), a saline catabolite. Has high activity toward isobutyryl-CoA. Could be an isobutyryl-CoA dehydrogenase that functions in valine catabolism. Also hydrolyzes 3-hydroxypropanoyl-CoA. This is 3-hydroxyisobutyryl-CoA hydrolase, mitochondrial (hibch) from Xenopus laevis (African clawed frog).